The chain runs to 422 residues: Tyrosine--tRNA ligase 1 (422 aa).

Tyr36 provides a ligand contact to L-tyrosine. Positions 41–50 (PTAGSLHIGH) match the 'HIGH' region motif. L-tyrosine is bound by residues Tyr173 and Gln177. The short motif at 233–237 (KFGKT) is the 'KMSKS' region element. Residue Lys236 coordinates ATP. Residues 355-419 (SDVVTLLLET…GKKQFAMVKL (65 aa)) form the S4 RNA-binding domain.

The protein belongs to the class-I aminoacyl-tRNA synthetase family. TyrS type 1 subfamily. Homodimer.

It localises to the cytoplasm. It catalyses the reaction tRNA(Tyr) + L-tyrosine + ATP = L-tyrosyl-tRNA(Tyr) + AMP + diphosphate + H(+). Functionally, catalyzes the attachment of tyrosine to tRNA(Tyr) in a two-step reaction: tyrosine is first activated by ATP to form Tyr-AMP and then transferred to the acceptor end of tRNA(Tyr). The chain is Tyrosine--tRNA ligase 1 from Vibrio vulnificus (strain CMCP6).